Here is a 507-residue protein sequence, read N- to C-terminus: Maturase K (507 aa).

The protein belongs to the intron maturase 2 family. MatK subfamily.

The protein resides in the plastid. Its subcellular location is the chloroplast. Functionally, usually encoded in the trnK tRNA gene intron. Probably assists in splicing its own and other chloroplast group II introns. This Lens culinaris (Lentil) protein is Maturase K.